Here is a 364-residue protein sequence, read N- to C-terminus: AYEKAVKGYITKRKPLGEALDEEIMDELSVKFGIVDDALEDLFKQIQDAGISIVDKDGNPSPLALVTDEIEKEEVSDTAMDEIVTNVRIDDPVRMYLKEIGRYPLISLDEETKLAEAIIAGGEGAEFAKQMLAEANLRLVVSIAKRYSGRGMQFLDLIQEGNMGLMKAVDKFDQTKGFKFSTYATWWIRQAITRAIADQARTIRIPVHMVETINKLIRVQRNLLQELGRDPSPEEIGKELHMAPDKVREVLKIAQEPVSLETPIGEEDDSHLGDFIEDDVIESPVDYTNRILLREQLDEVMDTLTDREENVLRMRFGLDDGRMHTLEDVGKQFKVTRERIRQIEAKAIKKLRHPRRSKPLRDFM.

The sigma-70 factor domain-2 stretch occupies residues 132 to 202; it reads LAEANLRLVV…TRAIADQART (71 aa). The short motif at 156–159 is the Interaction with polymerase core subunit RpoC element; sequence DLIQ. A sigma-70 factor domain-3 region spans residues 211-287; the sequence is ETINKLIRVQ…DDVIESPVDY (77 aa). The sigma-70 factor domain-4 stretch occupies residues 300 to 353; sequence VMDTLTDREENVLRMRFGLDDGRMHTLEDVGKQFKVTRERIRQIEAKAIKKLRH. Residues 326-345 constitute a DNA-binding region (H-T-H motif); that stretch reads LEDVGKQFKVTRERIRQIEA.

Belongs to the sigma-70 factor family. RpoD/SigA subfamily. As to quaternary structure, interacts transiently with the RNA polymerase catalytic core.

It localises to the cytoplasm. Functionally, sigma factors are initiation factors that promote the attachment of RNA polymerase to specific initiation sites and are then released. This sigma factor is the primary sigma factor during exponential growth. This Lactococcus lactis subsp. cremoris (Streptococcus cremoris) protein is RNA polymerase sigma factor SigA.